The sequence spans 369 residues: MIPLLMGAGISLALVMIGTQLFIRLLIRKGYGQFIRDDGPTSHHTKRGTPTMGGAVVIGTVILAYLLTHLISWWINPKAPGPSVSGWLLLLLMAGMGLVGFLDDFIKISKQRSLGLNAKAKLILQAAIGILFAVLAINFADHNGRTPATTKISFARDIPGLDLAFAGAGLGVLLFVIWANLIITAATNGVNLTDGLDGLAAGASVMVFGAYTLIGIWQSNQSCGSPRAVSSTVCYEVRDPLDLALLAAIIFGALIGFLWWNTSPAKIFMGDTGSLAIGGAIAGFAILSRTEILLAIIGGLFVLITLSVILQVGFFKLTGGKRLFKMAPLQHHFELKGWAEVTIVVRFWILGGLLVAIGLGAFYAEWVVF.

Helical transmembrane passes span 2 to 22, 55 to 75, 82 to 102, 120 to 140, 163 to 183, 196 to 216, 240 to 260, 267 to 287, 292 to 312, and 349 to 369; these read IPLL…TQLF, AVVI…SWWI, PSVS…VGFL, AKLI…INFA, LAFA…NLII, LDGL…LIGI, PLDL…FLWW, IFMG…FAIL, ILLA…ILQV, and ILGG…WVVF.

Belongs to the glycosyltransferase 4 family. MraY subfamily. Mg(2+) serves as cofactor.

The protein localises to the cell membrane. The enzyme catalyses UDP-N-acetyl-alpha-D-muramoyl-L-alanyl-gamma-D-glutamyl-meso-2,6-diaminopimeloyl-D-alanyl-D-alanine + di-trans,octa-cis-undecaprenyl phosphate = di-trans,octa-cis-undecaprenyl diphospho-N-acetyl-alpha-D-muramoyl-L-alanyl-D-glutamyl-meso-2,6-diaminopimeloyl-D-alanyl-D-alanine + UMP. Its pathway is cell wall biogenesis; peptidoglycan biosynthesis. Its function is as follows. Catalyzes the initial step of the lipid cycle reactions in the biosynthesis of the cell wall peptidoglycan: transfers peptidoglycan precursor phospho-MurNAc-pentapeptide from UDP-MurNAc-pentapeptide onto the lipid carrier undecaprenyl phosphate, yielding undecaprenyl-pyrophosphoryl-MurNAc-pentapeptide, known as lipid I. In Renibacterium salmoninarum (strain ATCC 33209 / DSM 20767 / JCM 11484 / NBRC 15589 / NCIMB 2235), this protein is Phospho-N-acetylmuramoyl-pentapeptide-transferase.